Consider the following 186-residue polypeptide: Threonylcarbamoyl-AMP synthase (186 aa).

The region spanning 6–186 is the YrdC-like domain; sequence GFRLRLAANA…FDAMSGRRIR (181 aa).

It belongs to the SUA5 family. TsaC subfamily.

It is found in the cytoplasm. It catalyses the reaction L-threonine + hydrogencarbonate + ATP = L-threonylcarbamoyladenylate + diphosphate + H2O. Functionally, required for the formation of a threonylcarbamoyl group on adenosine at position 37 (t(6)A37) in tRNAs that read codons beginning with adenine. Catalyzes the conversion of L-threonine, HCO(3)(-)/CO(2) and ATP to give threonylcarbamoyl-AMP (TC-AMP) as the acyladenylate intermediate, with the release of diphosphate. This is Threonylcarbamoyl-AMP synthase from Methylococcus capsulatus (strain ATCC 33009 / NCIMB 11132 / Bath).